Here is a 235-residue protein sequence, read N- to C-terminus: Transmembrane protein 215 (235 aa).

The next 2 helical transmembrane spans lie at 12–32 and 40–60; these read LVVA…VSGM and IPLL…IALA. The segment at 99-145 is disordered; sequence SDLESGKGSSDELAKKAGLRGKPPPQSQGEVSVASSINSPTPTEEGE. Polar residues predominate over residues 125 to 140; it reads SQGEVSVASSINSPTP.

The protein localises to the membrane. The polypeptide is Transmembrane protein 215 (TMEM215) (Homo sapiens (Human)).